The following is a 351-amino-acid chain: Heat-inducible transcription repressor HrcA (351 aa).

It belongs to the HrcA family.

Negative regulator of class I heat shock genes (grpE-dnaK-dnaJ and groELS operons). Prevents heat-shock induction of these operons. This Mycoplasma pneumoniae (strain ATCC 29342 / M129 / Subtype 1) (Mycoplasmoides pneumoniae) protein is Heat-inducible transcription repressor HrcA.